A 142-amino-acid polypeptide reads, in one-letter code: Hemoglobin subunit alpha (142 aa).

Positions 2–142 constitute a Globin domain; the sequence is VLSPADKTNV…VSTVLVSKYR (141 aa). Phosphoserine is present on serine 4. Position 8 is an N6-succinyllysine (lysine 8). Threonine 9 bears the Phosphothreonine mark. An N6-succinyllysine modification is found at lysine 12. Lysine 17 is subject to N6-acetyllysine; alternate. Lysine 17 is modified (N6-succinyllysine; alternate). Tyrosine 25 carries the post-translational modification Phosphotyrosine. Serine 36 is modified (phosphoserine). N6-succinyllysine is present on lysine 41. Phosphoserine is present on serine 50. Histidine 59 contributes to the O2 binding site. Histidine 88 is a heme b binding site. Position 103 is a phosphoserine (serine 103). Residue threonine 109 is modified to Phosphothreonine. Phosphoserine occurs at positions 125 and 132. Position 135 is a phosphothreonine (threonine 135). Phosphoserine is present on serine 139.

The protein belongs to the globin family. Heterotetramer of two alpha chains and two beta chains. Red blood cells.

In terms of biological role, involved in oxygen transport from the lung to the various peripheral tissues. Hemopressin acts as an antagonist peptide of the cannabinoid receptor CNR1. Hemopressin-binding efficiently blocks cannabinoid receptor CNR1 and subsequent signaling. This chain is Hemoglobin subunit alpha (HBA), found in Antrozous pallidus (Pallid bat).